The following is a 480-amino-acid chain: MAVLGVQLVVTLFTATLMHRLAPHCSFARWLLCNGSLFRYIHPSEEELRALSGKLRPRVRKERWANGLHDEKPLSVPRDAHFQLQTCPLTAVDALVLRFFLEYQWFVDFAVYSVGVYLFTEAYYFVLGPVQETNIAVFWCLLTLAFSLKVFLMVTRLYFSTKEGGERSVCLSFAFLFLLLAMLVQVVREETLELGLEPGLASMTQHLEPILKKQDWDWTLPVIKLAIRLGLAVLGSLLGAFLIFPGLRLAQTHQDALTLSADRPLLQLLLHTSFLSPLCTLWLWTKPVARDFLYQAPTRNMTFSVPSEGAFDSLRLWVLVALCLLRLAVTRPHLQAYLCLAKARVEQLRKEAGRIEAREIQQRVVRVYCYVTVVSLQYLTPLILTLHCTLLLKTLGGYSWALSSTPPPLAPSQPSEALIPVDPAGDEAQQTAAQVAGILGGLLTPLFLRGMLAYIIWWTAACQLLSSLFGLYFHQHLAAS.

An N-terminal signal peptide occupies residues 1 to 28; the sequence is MAVLGVQLVVTLFTATLMHRLAPHCSFA. The Extracellular portion of the chain corresponds to 29-98; that stretch reads RWLLCNGSLF…LTAVDALVLR (70 aa). Residue Asn-34 is glycosylated (N-linked (GlcNAc...) asparagine). A helical transmembrane segment spans residues 99–119; sequence FFLEYQWFVDFAVYSVGVYLF. The Cytoplasmic segment spans residues 120 to 134; that stretch reads TEAYYFVLGPVQETN. Residues 135–155 traverse the membrane as a helical segment; the sequence is IAVFWCLLTLAFSLKVFLMVT. The Extracellular segment spans residues 156–166; the sequence is RLYFSTKEGGE. Residues 167–187 form a helical membrane-spanning segment; the sequence is RSVCLSFAFLFLLLAMLVQVV. Topologically, residues 188 to 224 are cytoplasmic; the sequence is REETLELGLEPGLASMTQHLEPILKKQDWDWTLPVIK. Residues 225 to 245 form a helical membrane-spanning segment; sequence LAIRLGLAVLGSLLGAFLIFP. The Extracellular portion of the chain corresponds to 246-263; it reads GLRLAQTHQDALTLSADR. A helical membrane pass occupies residues 264–284; the sequence is PLLQLLLHTSFLSPLCTLWLW. At 285 to 304 the chain is on the cytoplasmic side; the sequence is TKPVARDFLYQAPTRNMTFS. Residues 305-325 traverse the membrane as a helical segment; that stretch reads VPSEGAFDSLRLWVLVALCLL. Residues 326 to 370 are Extracellular-facing; that stretch reads RLAVTRPHLQAYLCLAKARVEQLRKEAGRIEAREIQQRVVRVYCY. A helical transmembrane segment spans residues 371-391; that stretch reads VTVVSLQYLTPLILTLHCTLL. Over 392–450 the chain is Cytoplasmic; that stretch reads LKTLGGYSWALSSTPPPLAPSQPSEALIPVDPAGDEAQQTAAQVAGILGGLLTPLFLRG. The chain crosses the membrane as a helical span at residues 451–473; sequence MLAYIIWWTAACQLLSSLFGLYF. The Extracellular segment spans residues 474–480; that stretch reads HQHLAAS.

This sequence belongs to the TMEM161 family.

The protein localises to the membrane. May play a role in protection against oxidative stress. Overexpression leads to reduced levels of oxidant-induced DNA damage and apoptosis. This is Transmembrane protein 161A (Tmem161a) from Mus musculus (Mouse).